The sequence spans 748 residues: Photosystem I P700 chlorophyll a apoprotein A1 (748 aa).

8 helical membrane passes run 70-93 (VFSA…FHGA), 156-179 (LYTT…FHYH), 195-219 (LNHH…HVSM), 291-309 (TAHH…GHMY), 346-369 (WHAQ…HHMY), 385-411 (LSLF…IFMV), 433-455 (AIIS…LYIH), and 530-548 (FLVH…LILL). The [4Fe-4S] cluster site is built by Cys572 and Cys581. The next 2 membrane-spanning stretches (helical) occupy residues 588-609 (HIFL…HFSW) and 662-684 (LSAY…MFLF). His673 lines the chlorophyll a' pocket. Chlorophyll a-binding residues include Met681 and Tyr689. Residue Trp690 participates in phylloquinone binding. The chain crosses the membrane as a helical span at residues 722-742 (AVGVAHYLLGGIATTWAFFLA).

Belongs to the PsaA/PsaB family. The PsaA/B heterodimer binds the P700 chlorophyll special pair and subsequent electron acceptors. PSI consists of a core antenna complex that captures photons, and an electron transfer chain that converts photonic excitation into a charge separation. The eukaryotic PSI reaction center is composed of at least 11 subunits. It depends on P700 is a chlorophyll a/chlorophyll a' dimer, A0 is one or more chlorophyll a, A1 is one or both phylloquinones and FX is a shared 4Fe-4S iron-sulfur center. as a cofactor.

It is found in the plastid. The protein localises to the chloroplast thylakoid membrane. The enzyme catalyses reduced [plastocyanin] + hnu + oxidized [2Fe-2S]-[ferredoxin] = oxidized [plastocyanin] + reduced [2Fe-2S]-[ferredoxin]. Functionally, psaA and PsaB bind P700, the primary electron donor of photosystem I (PSI), as well as the electron acceptors A0, A1 and FX. PSI is a plastocyanin-ferredoxin oxidoreductase, converting photonic excitation into a charge separation, which transfers an electron from the donor P700 chlorophyll pair to the spectroscopically characterized acceptors A0, A1, FX, FA and FB in turn. Oxidized P700 is reduced on the lumenal side of the thylakoid membrane by plastocyanin. This Chara vulgaris (Common stonewort) protein is Photosystem I P700 chlorophyll a apoprotein A1.